A 380-amino-acid chain; its full sequence is MSLSDWHLAVKLADQPLAPKSILQLPETELGEYSLGGYSISFLKQLIAGKLQESVPDPELIDLIYCGRKLKDDQTLDFYGIQPGSTVHVLRKSWPEPDQKPEPVDKVAALREFRVLHTALHSSSSYREAVFKMLSNKESLDQIIVATPGLSSDPIALGVLQDKDLFSVFADPNMLDTLVPAHPALVNAIILVLHSVAGSTPMPGADSSSRSMPSSSYRDMPGGFLFDGLSDDEDDFHPSTRSTPSSSTPSSRPASLGYSGAAGPRPITQSELATALALASTPESSSHTPTPGTQGHSSGTSPMSSGVQSGTPITNDLFSQALQHALQASGQPSLQIQWQPQLQQLRDMGIQDDELSLRALQATGGDIQAALELIFAGGAP.

In terms of domain architecture, Ubiquitin-like spans 18–98 (APKSILQLPE…VLRKSWPEPD (81 aa)). Residues 200–313 (TPMPGADSSS…SSGVQSGTPI (114 aa)) form a disordered region. A compositionally biased stretch (low complexity) spans 206 to 221 (DSSSRSMPSSSYRDMP). A Phosphoserine modification is found at Ser230. Low complexity-rich tracts occupy residues 239 to 253 (STRS…SSRP) and 270 to 293 (SELA…TPGT). A compositionally biased stretch (polar residues) spans 294 to 313 (QGHSSGTSPMSSGVQSGTPI). In terms of domain architecture, UBA spans 333–377 (SLQIQWQPQLQQLRDMGIQDDELSLRALQATGGDIQAALELIFAG).

In terms of assembly, binds ubiquitin. Interacts with MAVS; this interaction enhances TRIM21-dependent 'Lys-27'-linked polyubiquitination of MAVS. In terms of processing, deubiquitinated by OTUD4 which stabilizes UBL7 expression.

Functionally, interferon-stimulated protein that positively regulates RNA virus-triggered innate immune signaling. Mechanistically, promotes 'Lys-27'-linked polyubiquitination of MAVS through TRIM21 leading to enhanced the IFN signaling pathway. This chain is Ubiquitin-like protein 7 (Ubl7), found in Mus musculus (Mouse).